Consider the following 968-residue polypeptide: uncharacterized protein (968 aa).

Disordered regions lie at residues 124 to 177 (SSIS…FSFP), 348 to 437 (QEDS…VNDS), 572 to 595 (TTTT…QQNT), 608 to 627 (PKAS…GSSK), and 837 to 877 (KASK…KKGK). Residues 131–157 (TIESNYLSNPSSPCQSTPILESSTPFS) show a composition bias toward polar residues. Composition is skewed to low complexity over residues 158–177 (QKLM…FSFP), 352–431 (NNNN…NCNN), and 572–593 (TTTT…QQQQ). Over residues 841–857 (DSSSSPTASSAAPGDSS) the composition is skewed to low complexity.

This is an uncharacterized protein from Dictyostelium discoideum (Social amoeba).